The following is a 372-amino-acid chain: Flagellar P-ring protein (372 aa).

A signal peptide spans 1-26; sequence MNLSSLPHRLLAAAVALCAIAAPASA.

This sequence belongs to the FlgI family. In terms of assembly, the basal body constitutes a major portion of the flagellar organelle and consists of four rings (L,P,S, and M) mounted on a central rod.

The protein resides in the periplasm. The protein localises to the bacterial flagellum basal body. In terms of biological role, assembles around the rod to form the L-ring and probably protects the motor/basal body from shearing forces during rotation. This is Flagellar P-ring protein from Xanthomonas campestris pv. campestris (strain ATCC 33913 / DSM 3586 / NCPPB 528 / LMG 568 / P 25).